We begin with the raw amino-acid sequence, 663 residues long: Alcohol oxidase 2 (663 aa).

Residue 8–38 participates in FAD binding; sequence DILVLGGGSSGSCIAGRLANLDHSLKVGLIE. Residue His567 is the Proton acceptor of the active site. Positions 661–663 match the Microbody targeting signal motif; that stretch reads ARF.

The protein belongs to the GMC oxidoreductase family. As to quaternary structure, homooctamer. FAD is required as a cofactor.

It is found in the peroxisome matrix. The catalysed reaction is a primary alcohol + O2 = an aldehyde + H2O2. Its pathway is energy metabolism; methane degradation. Functionally, minor isoform of alcohol oxidase, which catalyzes the oxidation of methanol to formaldehyde and hydrogen peroxide, the first step in the methanol utilization pathway of methylotrophic yeasts. The sequence is that of Alcohol oxidase 2 (AOX2) from Komagataella phaffii (strain ATCC 76273 / CBS 7435 / CECT 11047 / NRRL Y-11430 / Wegner 21-1) (Yeast).